The chain runs to 558 residues: uncharacterized protein (558 aa).

Transmembrane regions (helical) follow at residues 21-41 (IFCF…LPIA), 69-89 (FLDA…STVV), 100-120 (IVLA…AFLA), 160-180 (IIFL…LFYF), 220-240 (AFQA…IDLI), 251-271 (GLGI…GIGY), 303-323 (VITN…VEFI), 386-406 (VFPV…AMFI), 413-433 (TAGG…VAKF), 454-474 (AFLV…LLPL), 479-499 (PVSF…VGLS), and 519-539 (ALCL…LTFV).

The protein belongs to the TrkH potassium transport family.

Its subcellular location is the cell membrane. This is an uncharacterized protein from Mycoplasma genitalium (strain ATCC 33530 / DSM 19775 / NCTC 10195 / G37) (Mycoplasmoides genitalium).